A 539-amino-acid polypeptide reads, in one-letter code: Phosphoenolpyruvate carboxykinase (ATP) (539 aa).

Substrate contacts are provided by Arg61, Tyr195, and Lys201. ATP contacts are provided by residues Lys201, His220, and Gly238–Thr246. Mn(2+) is bound by residues Lys201 and His220. Mn(2+) is bound at residue Asp259. Positions 287, 325, and 450 each coordinate ATP. Arg325 contacts substrate.

The protein belongs to the phosphoenolpyruvate carboxykinase (ATP) family. Requires Mn(2+) as cofactor.

The protein resides in the cytoplasm. The enzyme catalyses oxaloacetate + ATP = phosphoenolpyruvate + ADP + CO2. The protein operates within carbohydrate biosynthesis; gluconeogenesis. Functionally, involved in the gluconeogenesis. Catalyzes the conversion of oxaloacetate (OAA) to phosphoenolpyruvate (PEP) through direct phosphoryl transfer between the nucleoside triphosphate and OAA. The polypeptide is Phosphoenolpyruvate carboxykinase (ATP) (Methylobacterium radiotolerans (strain ATCC 27329 / DSM 1819 / JCM 2831 / NBRC 15690 / NCIMB 10815 / 0-1)).